A 607-amino-acid chain; its full sequence is Elongation factor 4 (607 aa).

The 183-residue stretch at 11 to 193 folds into the tr-type G domain; sequence SKIRNFSIIA…QIVEKVPAPT (183 aa). GTP contacts are provided by residues 23 to 28 and 140 to 143; these read DHGKST and NKID.

This sequence belongs to the TRAFAC class translation factor GTPase superfamily. Classic translation factor GTPase family. LepA subfamily.

It localises to the cell membrane. The enzyme catalyses GTP + H2O = GDP + phosphate + H(+). Its function is as follows. Required for accurate and efficient protein synthesis under certain stress conditions. May act as a fidelity factor of the translation reaction, by catalyzing a one-codon backward translocation of tRNAs on improperly translocated ribosomes. Back-translocation proceeds from a post-translocation (POST) complex to a pre-translocation (PRE) complex, thus giving elongation factor G a second chance to translocate the tRNAs correctly. Binds to ribosomes in a GTP-dependent manner. The protein is Elongation factor 4 of Bacillus cereus (strain ZK / E33L).